A 712-amino-acid polypeptide reads, in one-letter code: TGF-beta-activated kinase 1 and MAP3K7-binding protein 3 (712 aa).

N-acetylalanine is present on alanine 2. The region spanning 8 to 51 is the CUE domain; that stretch reads LDIQVLHDLRQRFPEIPEGVVSQCMLQNNNNLEACCRALSQESS. Phosphoserine is present on residues serine 60, serine 101, and serine 103. 4 disordered regions span residues 141–189, 227–345, 369–447, and 475–509; these read FMNE…HIPR, PGSI…KQGS, TVEP…SPRV, and ERSAAPEPIQPISVIPGSGGEKGSHKYQRSSSSGS. The segment covering 163–173 has biased composition (polar residues); that stretch reads MQTGMNPSAMQ. Low complexity-rich tracts occupy residues 233-249 and 269-290; these read RQTSQSSSGRQTPQSTP and YPHQQNYQPSQYSPKQQQIPQS. The span at 322–332 shows a compositional bias: pro residues; that stretch reads PPSPSTTPPHP. Polar residues-rich tracts occupy residues 336–345 and 371–404; these read GPPSYQKQGS and EPSQRPGTAINRSPSPISNQPSPRNQHSLYTATT. Serine 385 is subject to Phosphoserine. Threonine 404 bears the Phosphothreonine mark. Residues 405–417 show a composition bias toward low complexity; sequence PPSSSPSRGISSQ. A phosphoserine mark is found at serine 409 and serine 492. Serine 506 is modified (phosphoserine; by MAPKAPK2 and MAPKAPK3). Residues 517–559 are a coiled coil; sequence ALLLHQRARMERLAKQLKLEKEELERLKSEVNGMEHDLMQRRL. The interval 609–636 is disordered; it reads MNNFYDNIEPGPVVPPKPSKKDSSDPCT. Positions 627–636 are enriched in basic and acidic residues; sequence SKKDSSDPCT. Residue lysine 649 forms a Glycyl lysine isopeptide (Lys-Gly) (interchain with G-Cter in ubiquitin) linkage. A compositionally biased stretch (basic and acidic residues) spans 658-667; that stretch reads QAAAADEHRT. The disordered stretch occupies residues 658 to 682; sequence QAAAADEHRTGSTQSPRTQPRDEDY. The RanBP2-type zinc finger occupies 682–712; the sequence is YEGAPWNCDSCTFLNHPALNRCEQCEMPRYT. The residue at position 692 (cysteine 692) is a (Microbial infection) S-methylcysteine.

Interacts with TAB1, TAB2, MAP3K7, TRAF2 and TRAF6. The minimal TAB3-containing complex (TAB1-MAP3K7-TAB3) appears not to contain TAB2. However, it seems sensible to consider that TAB2 may also join this complex and may act in a cooperative manner with TAB3. Interacts with DYNC2I2 (via the WD domains). Interacts with RBCK1. Binds 'Lys-63'-linked polyubiquitin chains. Interacts with TRIM5. Interacts with TRIM38 (via B30.2/SPRY domain), leading to its translocation to lysosomes and degradation. Interacts with ASB1. In terms of assembly, (Microbial infection) Interacts with M.tuberculosis PtpA, which blocks the NF-kappa-B signaling pathway. In terms of processing, ubiquitinated; following IL1 stimulation or TRAF6 overexpression. Ubiquitinated by AMFR via 'Lys-27'-linked polyubiquitination; leading to TAK1/MAP3K7 activation. Degraded in a lysosome-dependent manner following interaction with TRIM38. Post-translationally, phosphorylated at Ser-506 by MAPKAPK2 and MAPKAPK3 following IL1 treatment. In terms of processing, (Microbial infection) Methylated at Cys-692 by enteropathogenic E.coli protein NleE or S.flexneri protein OspZ: methylation disrupts zinc-binding and ability to bind 'Lys-63'-linked ubiquitin, leading to NF-kappa-B inactivation. As to expression, widely expressed. Constitutively overexpressed in certain tumor tissues. In terms of tissue distribution, major transcript. Minor transcript.

In terms of biological role, adapter required to activate the JNK and NF-kappa-B signaling pathways through the specific recognition of 'Lys-63'-linked polyubiquitin chains by its RanBP2-type zinc finger (NZF). Acts as an adapter linking MAP3K7/TAK1 and TRAF6 to 'Lys-63'-linked polyubiquitin chains. The RanBP2-type zinc finger (NZF) specifically recognizes Lys-63'-linked polyubiquitin chains unanchored or anchored to the substrate proteins such as RIPK1/RIP1 and RIPK2: this acts as a scaffold to organize a large signaling complex to promote autophosphorylation of MAP3K7/TAK1, and subsequent activation of I-kappa-B-kinase (IKK) core complex by MAP3K7/TAK1. Functionally, may be an oncogenic factor. This Homo sapiens (Human) protein is TGF-beta-activated kinase 1 and MAP3K7-binding protein 3.